The sequence spans 203 residues: FMN-dependent NADH:quinone oxidoreductase (203 aa).

143–146 is an FMN binding site; sequence SNGG.

This sequence belongs to the azoreductase type 1 family. Homodimer. The cofactor is FMN.

The enzyme catalyses 2 a quinone + NADH + H(+) = 2 a 1,4-benzosemiquinone + NAD(+). It carries out the reaction N,N-dimethyl-1,4-phenylenediamine + anthranilate + 2 NAD(+) = 2-(4-dimethylaminophenyl)diazenylbenzoate + 2 NADH + 2 H(+). Its function is as follows. Quinone reductase that provides resistance to thiol-specific stress caused by electrophilic quinones. Functionally, also exhibits azoreductase activity. Catalyzes the reductive cleavage of the azo bond in aromatic azo compounds to the corresponding amines. This chain is FMN-dependent NADH:quinone oxidoreductase, found in Streptococcus suis (strain 98HAH33).